The following is a 556-amino-acid chain: 2-succinyl-5-enolpyruvyl-6-hydroxy-3-cyclohexene-1-carboxylate synthase (556 aa).

It belongs to the TPP enzyme family. MenD subfamily. As to quaternary structure, homodimer. Mg(2+) is required as a cofactor. Mn(2+) serves as cofactor. Requires thiamine diphosphate as cofactor.

The catalysed reaction is isochorismate + 2-oxoglutarate + H(+) = 5-enolpyruvoyl-6-hydroxy-2-succinyl-cyclohex-3-ene-1-carboxylate + CO2. It functions in the pathway quinol/quinone metabolism; 1,4-dihydroxy-2-naphthoate biosynthesis; 1,4-dihydroxy-2-naphthoate from chorismate: step 2/7. The protein operates within quinol/quinone metabolism; menaquinone biosynthesis. Functionally, catalyzes the thiamine diphosphate-dependent decarboxylation of 2-oxoglutarate and the subsequent addition of the resulting succinic semialdehyde-thiamine pyrophosphate anion to isochorismate to yield 2-succinyl-5-enolpyruvyl-6-hydroxy-3-cyclohexene-1-carboxylate (SEPHCHC). The sequence is that of 2-succinyl-5-enolpyruvyl-6-hydroxy-3-cyclohexene-1-carboxylate synthase from Salmonella paratyphi B (strain ATCC BAA-1250 / SPB7).